A 145-amino-acid polypeptide reads, in one-letter code: 3-hydroxyacyl-[acyl-carrier-protein] dehydratase FabZ (145 aa).

The active site involves His-50.

It belongs to the thioester dehydratase family. FabZ subfamily.

It is found in the cytoplasm. It carries out the reaction a (3R)-hydroxyacyl-[ACP] = a (2E)-enoyl-[ACP] + H2O. In terms of biological role, involved in unsaturated fatty acids biosynthesis. Catalyzes the dehydration of short chain beta-hydroxyacyl-ACPs and long chain saturated and unsaturated beta-hydroxyacyl-ACPs. In Coxiella burnetii (strain CbuK_Q154) (Coxiella burnetii (strain Q154)), this protein is 3-hydroxyacyl-[acyl-carrier-protein] dehydratase FabZ.